The following is a 208-amino-acid chain: MVDNKDFNEELKENIQEELDNETKAENPNIDEEVEEVSEDIKADEKVIDFEELKALKEENTMFKSKTKKLENELEALKDRLLRISAEYENYRKRTDKEKERIYTDACEDVLIKMLPVLDNLERALAVDGTVEDLKKGVEMTVRQFEDALEKLQVEEISTENGFDPELHQAMMVVEQEGAEPNQVAQVFQKGYKRGDKVIRHSMVTVTK.

The span at 1–25 (MVDNKDFNEELKENIQEELDNETKA) shows a compositional bias: basic and acidic residues. The segment at 1 to 38 (MVDNKDFNEELKENIQEELDNETKAENPNIDEEVEEVS) is disordered. Residues 29–38 (NIDEEVEEVS) show a composition bias toward acidic residues.

Belongs to the GrpE family. In terms of assembly, homodimer.

It is found in the cytoplasm. Its function is as follows. Participates actively in the response to hyperosmotic and heat shock by preventing the aggregation of stress-denatured proteins, in association with DnaK and GrpE. It is the nucleotide exchange factor for DnaK and may function as a thermosensor. Unfolded proteins bind initially to DnaJ; upon interaction with the DnaJ-bound protein, DnaK hydrolyzes its bound ATP, resulting in the formation of a stable complex. GrpE releases ADP from DnaK; ATP binding to DnaK triggers the release of the substrate protein, thus completing the reaction cycle. Several rounds of ATP-dependent interactions between DnaJ, DnaK and GrpE are required for fully efficient folding. The chain is Protein GrpE from Clostridium perfringens (strain ATCC 13124 / DSM 756 / JCM 1290 / NCIMB 6125 / NCTC 8237 / Type A).